A 558-amino-acid polypeptide reads, in one-letter code: Glucose-6-phosphate isomerase (558 aa).

Ala2 is modified (N-acetylalanine). Residue Lys12 is modified to N6-acetyllysine. Phosphoserine occurs at positions 86 and 107. Lys142 carries the post-translational modification N6-acetyllysine. 159 to 160 (GS) lines the D-glucose 6-phosphate pocket. Position 185 is a phosphoserine; by CK2 (Ser185). Residue 210 to 215 (SKTFTT) participates in D-glucose 6-phosphate binding. Residue Thr250 is modified to Phosphothreonine. The D-glucose 6-phosphate site is built by Gln354, Glu358, and His389. Glu358 (proton donor) is an active-site residue. His389 is an active-site residue. Lys454 carries the post-translational modification N6-acetyllysine; alternate. Position 454 is an N6-malonyllysine; alternate (Lys454). The residue at position 454 (Lys454) is an N6-succinyllysine; alternate. Ser455 carries the post-translational modification Phosphoserine. A D-glucose 6-phosphate-binding site is contributed by Lys519. Lys519 is an active-site residue.

Belongs to the GPI family. In terms of assembly, homodimer; in the catalytically active form. Monomer in the secreted form. Phosphorylation at Ser-185 by CK2 has been shown to decrease enzymatic activity and may contribute to secretion by a non-classical secretory pathway. In terms of processing, ISGylated.

It is found in the cytoplasm. The protein resides in the secreted. The enzyme catalyses alpha-D-glucose 6-phosphate = beta-D-fructose 6-phosphate. It functions in the pathway carbohydrate degradation; glycolysis; D-glyceraldehyde 3-phosphate and glycerone phosphate from D-glucose: step 2/4. Its function is as follows. In the cytoplasm, catalyzes the conversion of glucose-6-phosphate to fructose-6-phosphate, the second step in glycolysis, and the reverse reaction during gluconeogenesis. Besides it's role as a glycolytic enzyme, also acts as a secreted cytokine: acts as an angiogenic factor (AMF) that stimulates endothelial cell motility. Acts as a neurotrophic factor, neuroleukin, for spinal and sensory neurons. It is secreted by lectin-stimulated T-cells and induces immunoglobulin secretion. This is Glucose-6-phosphate isomerase from Rattus norvegicus (Rat).